The following is a 292-amino-acid chain: ATP synthase gamma chain (292 aa).

This sequence belongs to the ATPase gamma chain family. As to quaternary structure, F-type ATPases have 2 components, CF(1) - the catalytic core - and CF(0) - the membrane proton channel. CF(1) has five subunits: alpha(3), beta(3), gamma(1), delta(1), epsilon(1). CF(0) has three main subunits: a, b and c.

The protein localises to the cell inner membrane. Functionally, produces ATP from ADP in the presence of a proton gradient across the membrane. The gamma chain is believed to be important in regulating ATPase activity and the flow of protons through the CF(0) complex. In Rhodopseudomonas palustris (strain BisB18), this protein is ATP synthase gamma chain.